The primary structure comprises 101 residues: DNA-binding protein Fis (101 aa).

The segment at residues 77-96 (QTRAANMLGINRGTLRKKLK) is a DNA-binding region (H-T-H motif).

The protein belongs to the transcriptional regulatory Fis family. In terms of assembly, homodimer.

Functionally, activates ribosomal RNA transcription. Plays a direct role in upstream activation of rRNA promoters. The sequence is that of DNA-binding protein Fis from Shewanella pealeana (strain ATCC 700345 / ANG-SQ1).